We begin with the raw amino-acid sequence, 96 residues long: Co-chaperonin GroES (96 aa).

It belongs to the GroES chaperonin family. Heptamer of 7 subunits arranged in a ring. Interacts with the chaperonin GroEL.

It is found in the cytoplasm. Together with the chaperonin GroEL, plays an essential role in assisting protein folding. The GroEL-GroES system forms a nano-cage that allows encapsulation of the non-native substrate proteins and provides a physical environment optimized to promote and accelerate protein folding. GroES binds to the apical surface of the GroEL ring, thereby capping the opening of the GroEL channel. The sequence is that of Co-chaperonin GroES from Hydrogenobaculum sp. (strain Y04AAS1).